A 1369-amino-acid polypeptide reads, in one-letter code: DNA-directed RNA polymerase subunit beta' (1369 aa).

The segment at 1 to 43 (MTSSSPKTRKSSTKSKAKRGSKSKKAAEIKAVQRLSKTPPPFR) is disordered. Residues 7–24 (KTRKSSTKSKAKRGSKSK) show a composition bias toward basic residues. Zn(2+)-binding residues include C253, C320, C327, and C330. Positions 1294 to 1369 (TVDMPSSPVA…LQEEGLLSDE (76 aa)) are disordered. Positions 1342 to 1351 (DDELSAEDQM) are enriched in acidic residues. Positions 1357–1369 (LEGLQEEGLLSDE) are enriched in low complexity.

The protein belongs to the RNA polymerase beta' chain family. RpoC2 subfamily. As to quaternary structure, in cyanobacteria the RNAP catalytic core is composed of 2 alpha, 1 beta, 1 beta', 1 gamma and 1 omega subunit. When a sigma factor is associated with the core the holoenzyme is formed, which can initiate transcription. Zn(2+) is required as a cofactor.

It carries out the reaction RNA(n) + a ribonucleoside 5'-triphosphate = RNA(n+1) + diphosphate. In terms of biological role, DNA-dependent RNA polymerase catalyzes the transcription of DNA into RNA using the four ribonucleoside triphosphates as substrates. The chain is DNA-directed RNA polymerase subunit beta' from Prochlorococcus marinus (strain NATL1A).